The following is a 59-amino-acid chain: Large ribosomal subunit protein bL33 (59 aa).

Belongs to the bacterial ribosomal protein bL33 family.

The sequence is that of Large ribosomal subunit protein bL33 from Prosthecochloris aestuarii (strain DSM 271 / SK 413).